Consider the following 1193-residue polypeptide: Protein diaphanous homolog 3 (1193 aa).

Basic residues predominate over residues 1–10 (MERHQPRLHH). The tract at residues 1–57 (MERHQPRLHHPAQGSAAGTPYPSSASLRGCRESKMPRRKGPQHPPPPSGPEEPGEKR) is disordered. Serine 26 bears the Phosphoserine mark. A Nuclear localization signal motif is present at residues 36 to 60 (PRRKGPQHPPPPSGPEEPGEKRPKF). Residue threonine 68 is modified to Phosphothreonine. Phosphoserine is present on residues serine 77 and serine 175. The GBD/FH3 domain maps to 114–476 (PKPLSENELL…QIVLHRDGMD (363 aa)). Residues 497–554 (IDQAKLEEFEEKASELYKKFEKEFTDHQETQAELQKKEAKINELQAELQAFKSQFGAL) adopt a coiled-coil conformation. Residues 558–622 (CNIPLPPSKE…PPPLGFLGGQ (65 aa)) are disordered. Positions 561–631 (PLPPSKEGGT…QNSPPLPILP (71 aa)) constitute an FH1 domain. The segment covering 575 to 600 (LPPPPPLPSGGGVPPPPPPPPPPPLP) has biased composition (pro residues). Phosphoserine is present on serine 624. Residues 636-1034 (PKKEFKPEIS…EKRVRIAKEL (399 aa)) enclose the FH2 domain. Residues 1013–1056 (KENIKKREAEEKEKRVRIAKELAERERLERQQKKKRLLEMKTEG) adopt a coiled-coil conformation. Positions 1057-1087 (DETGVMDNLLEALQSGAAFRDRRKRTPMPKD) constitute a DAD domain. Residues serine 1093 and serine 1179 each carry the phosphoserine modification. Positions 1184–1193 (EALLARLRAL) match the Nuclear export signal motif.

Belongs to the formin homology family. Diaphanous subfamily. Post-translationally, ubiquitinated.

It is found in the cytoplasm. The protein localises to the nucleus. Actin nucleation and elongation factor required for the assembly of F-actin structures, such as actin cables and stress fibers. Required for cytokinesis, stress fiber formation and transcriptional activation of the serum response factor. Binds to GTP-bound form of Rho and to profilin: acts in a Rho-dependent manner to recruit profilin to the membrane, where it promotes actin polymerization. DFR proteins couple Rho and Src tyrosine kinase during signaling and the regulation of actin dynamics. Also acts as an actin nucleation and elongation factor in the nucleus by promoting nuclear actin polymerization inside the nucleus to drive serum-dependent SRF-MRTFA activity. The chain is Protein diaphanous homolog 3 (DIAPH3) from Homo sapiens (Human).